The sequence spans 680 residues: ATPase family AAA domain-containing protein FIGL1 (680 aa).

Disordered stretches follow at residues 214–234 (YGNS…NQDR), 250–275 (FGTK…GAPN), and 288–352 (VRQK…GGKT). Over residues 295–308 (TESPSSCLSPQSDK) the composition is skewed to polar residues. Gly residues predominate over residues 313–323 (RGYGSRSGGLR). A compositionally biased stretch (polar residues) spans 336 to 346 (TNGNNVGNLTS). Residues Ala406 and 446 to 451 (GTGKTM) each bind ATP.

This sequence belongs to the AAA ATPase family. The cofactor is Mg(2+).

The protein resides in the nucleus. The enzyme catalyses ATP + H2O = ADP + phosphate + H(+). Its function is as follows. Involved in DNA double-strand break (DBS) repair via homologous recombination (HR). Limits class II meiotic crossover (CO) formation by regulating the invasion step of meiotic HR. May counteract DMC1 and RAD51-mediated inter-homolog strand invasion to limit CO formation. Functions independently of FANCM. The sequence is that of ATPase family AAA domain-containing protein FIGL1 from Arabidopsis thaliana (Mouse-ear cress).